Here is a 63-residue protein sequence, read N- to C-terminus: Large ribosomal subunit protein uL29 (63 aa).

The protein belongs to the universal ribosomal protein uL29 family.

The polypeptide is Large ribosomal subunit protein uL29 (Actinobacillus pleuropneumoniae serotype 5b (strain L20)).